Consider the following 455-residue polypeptide: D-arabinitol 4-dehydrogenase (455 aa).

It belongs to the mannitol dehydrogenase family. In terms of assembly, monomer.

It catalyses the reaction D-arabinitol + NAD(+) = D-xylulose + NADH + H(+). Its pathway is carbohydrate metabolism; D-arabinitol metabolism. This Klebsiella pneumoniae protein is D-arabinitol 4-dehydrogenase (dalD).